A 733-amino-acid chain; its full sequence is Wall-associated receptor kinase 5 (733 aa).

The N-terminal stretch at 1–23 (MKVHSLFLMAIFFYLAYTQLVKA) is a signal peptide. At 24-330 (QPRDDCQTRC…IDTPKEEPKY (307 aa)) the chain is on the extracellular side. Residues Asn57, Asn77, Asn110, Asn137, Asn184, Asn206, Asn218, Asn232, and Asn247 are each glycosylated (N-linked (GlcNAc...) asparagine). The 48-residue stretch at 231–278 (GNQTCEQVVGRNICGGNSTCFDSTRGKGYNCKCLQGFDGNPYLSDGCQ) folds into the EGF-like 1 domain. Disulfide bonds link Cys235–Cys250, Cys244–Cys261, Cys263–Cys277, Cys283–Cys296, Cys290–Cys305, and Cys307–Cys320. The region spanning 279 to 321 (DINECTTRIHNCSDTSTCENTLGSFHCQCPSGSDLNTTTMSCI) is the EGF-like 2; calcium-binding domain. N-linked (GlcNAc...) asparagine glycosylation occurs at Asn289. Asn314 is a glycosylation site (N-linked (GlcNAc...) asparagine). A helical membrane pass occupies residues 331-351 (LGWTTVLLGTTIGFLIILLTI). The Cytoplasmic segment spans residues 352 to 733 (SYIQQKMRHR…VTRLDIETGR (382 aa)). A Phosphothreonine modification is found at Thr397. The region spanning 408–691 (YNESRILGQG…RVKTTKHQWS (284 aa)) is the Protein kinase domain. Residues 414–422 (LGQGGQGTV) and Lys436 contribute to the ATP site. Tyr481 carries the post-translational modification Phosphotyrosine. The active-site Proton acceptor is Asp533. Residues Thr567 and Thr572 each carry the phosphothreonine modification. Phosphotyrosine is present on Tyr580.

This sequence belongs to the protein kinase superfamily. Ser/Thr protein kinase family. As to expression, predominantly expressed in green tissues such as stems and leaves.

The protein localises to the membrane. The enzyme catalyses L-seryl-[protein] + ATP = O-phospho-L-seryl-[protein] + ADP + H(+). It catalyses the reaction L-threonyl-[protein] + ATP = O-phospho-L-threonyl-[protein] + ADP + H(+). Serine/threonine-protein kinase that may function as a signaling receptor of extracellular matrix component. Binding to pectin may have significance in the control of cell expansion, morphogenesis and development. The polypeptide is Wall-associated receptor kinase 5 (WAK5) (Arabidopsis thaliana (Mouse-ear cress)).